The following is a 140-amino-acid chain: Cytochrome b (140 aa).

The chain crosses the membrane as a helical span at residues 38–58 (FFALHFLLPFVLAALVIMHLI). Heme b contacts are provided by H42 and H56. H61 serves as a coordination point for a ubiquinone. The helical transmembrane segment at 85 to 105 (FVFKDLVTIFIFFIVLSIFVF) threads the bilayer.

This sequence belongs to the cytochrome b family. In terms of assembly, fungal cytochrome b-c1 complex contains 10 subunits; 3 respiratory subunits, 2 core proteins and 5 low-molecular weight proteins. Cytochrome b-c1 complex is a homodimer. It depends on heme b as a cofactor.

The protein localises to the mitochondrion inner membrane. In terms of biological role, component of the ubiquinol-cytochrome c reductase complex (complex III or cytochrome b-c1 complex) that is part of the mitochondrial respiratory chain. The b-c1 complex mediates electron transfer from ubiquinol to cytochrome c. Contributes to the generation of a proton gradient across the mitochondrial membrane that is then used for ATP synthesis. This is Cytochrome b (cob) from Aspergillus terreus.